A 210-amino-acid chain; its full sequence is MNQPIGNIYIVVAPSGAGKTSLVAALLQAEPSVELSISYSTRQARKGEIDGQHYHFIDRAAFEEMKDRGDFLEWAEVYGNCYGTSAPWIRGRLEAGRDILLEIDWQGAEQVRKVFPDAIGIFIAPPSIEELERRLRGRDTDTEEVILRRLASARAEIDKIAEYDYIVVNDDFERARLDLISIVRAQRLRSAPQCRRLADMFRRMGTAGAK.

The region spanning 6 to 184 (GNIYIVVAPS…ARLDLISIVR (179 aa)) is the Guanylate kinase-like domain. ATP is bound at residue 13-20 (APSGAGKT).

The protein belongs to the guanylate kinase family.

The protein resides in the cytoplasm. The enzyme catalyses GMP + ATP = GDP + ADP. Its function is as follows. Essential for recycling GMP and indirectly, cGMP. The chain is Guanylate kinase from Chromobacterium violaceum (strain ATCC 12472 / DSM 30191 / JCM 1249 / CCUG 213 / NBRC 12614 / NCIMB 9131 / NCTC 9757 / MK).